The chain runs to 130 residues: RutC family protein in leuC 5'region (130 aa).

It belongs to the RutC family.

The sequence is that of RutC family protein in leuC 5'region from Leuconostoc mesenteroides subsp. cremoris.